The chain runs to 150 residues: MKVIFLADVKGKGKKGEIKEVPTGYAQNFLIKKNLAKEATSQSIGELKGKQKAEEKAQAEILAEAQAVKAVLDEDKTRVQFQEKVGPDGRTFGSITAKKISEELQKQFGVKVDKRHIVLDHPIRAIGLIEVPVKLHKEVTAEIKLTITEA.

The protein belongs to the bacterial ribosomal protein bL9 family.

Its function is as follows. Binds to the 23S rRNA. This Streptococcus pyogenes serotype M2 (strain MGAS10270) protein is Large ribosomal subunit protein bL9.